Here is a 708-residue protein sequence, read N- to C-terminus: DNA ligase (708 aa).

Residues 35-39, 84-85, and Glu118 contribute to the NAD(+) site; these read DADYD and SL. Residue Lys120 is the N6-AMP-lysine intermediate of the active site. Positions 141, 182, 303, and 327 each coordinate NAD(+). Residues Cys419, Cys422, Cys437, and Cys443 each coordinate Zn(2+). One can recognise a BRCT domain in the interval 628-708; it reads TRASEVSGKT…GWAKIVADAQ (81 aa).

This sequence belongs to the NAD-dependent DNA ligase family. LigA subfamily. Mg(2+) is required as a cofactor. Requires Mn(2+) as cofactor.

The catalysed reaction is NAD(+) + (deoxyribonucleotide)n-3'-hydroxyl + 5'-phospho-(deoxyribonucleotide)m = (deoxyribonucleotide)n+m + AMP + beta-nicotinamide D-nucleotide.. In terms of biological role, DNA ligase that catalyzes the formation of phosphodiester linkages between 5'-phosphoryl and 3'-hydroxyl groups in double-stranded DNA using NAD as a coenzyme and as the energy source for the reaction. It is essential for DNA replication and repair of damaged DNA. The protein is DNA ligase of Rhizorhabdus wittichii (strain DSM 6014 / CCUG 31198 / JCM 15750 / NBRC 105917 / EY 4224 / RW1) (Sphingomonas wittichii).